The sequence spans 206 residues: Small ribosomal subunit protein uS4 (206 aa).

In terms of domain architecture, S4 RNA-binding spans 96–156 (SRLDNVVYRM…EKSKKQLRIQ (61 aa)).

This sequence belongs to the universal ribosomal protein uS4 family. In terms of assembly, part of the 30S ribosomal subunit. Contacts protein S5. The interaction surface between S4 and S5 is involved in control of translational fidelity.

In terms of biological role, one of the primary rRNA binding proteins, it binds directly to 16S rRNA where it nucleates assembly of the body of the 30S subunit. Its function is as follows. With S5 and S12 plays an important role in translational accuracy. This chain is Small ribosomal subunit protein uS4, found in Francisella philomiragia subsp. philomiragia (strain ATCC 25017 / CCUG 19701 / FSC 153 / O#319-036).